We begin with the raw amino-acid sequence, 418 residues long: Argininosuccinate synthase (418 aa).

ATP is bound by residues 14–22 and A42; that span reads AYSGGLDTS. The L-citrulline site is built by Y94 and S99. Residue G124 participates in ATP binding. Residues T126, N130, and D131 each coordinate L-aspartate. Residue N130 participates in L-citrulline binding. 5 residues coordinate L-citrulline: R134, S183, S192, E273, and Y285.

It belongs to the argininosuccinate synthase family. Type 1 subfamily. In terms of assembly, homotetramer.

The protein localises to the cytoplasm. It catalyses the reaction L-citrulline + L-aspartate + ATP = 2-(N(omega)-L-arginino)succinate + AMP + diphosphate + H(+). The protein operates within amino-acid biosynthesis; L-arginine biosynthesis; L-arginine from L-ornithine and carbamoyl phosphate: step 2/3. The sequence is that of Argininosuccinate synthase from Colwellia psychrerythraea (strain 34H / ATCC BAA-681) (Vibrio psychroerythus).